Here is a 225-residue protein sequence, read N- to C-terminus: Leucyl/phenylalanyl-tRNA--protein transferase (225 aa).

The protein belongs to the L/F-transferase family.

It is found in the cytoplasm. The enzyme catalyses N-terminal L-lysyl-[protein] + L-leucyl-tRNA(Leu) = N-terminal L-leucyl-L-lysyl-[protein] + tRNA(Leu) + H(+). The catalysed reaction is N-terminal L-arginyl-[protein] + L-leucyl-tRNA(Leu) = N-terminal L-leucyl-L-arginyl-[protein] + tRNA(Leu) + H(+). It carries out the reaction L-phenylalanyl-tRNA(Phe) + an N-terminal L-alpha-aminoacyl-[protein] = an N-terminal L-phenylalanyl-L-alpha-aminoacyl-[protein] + tRNA(Phe). Functionally, functions in the N-end rule pathway of protein degradation where it conjugates Leu, Phe and, less efficiently, Met from aminoacyl-tRNAs to the N-termini of proteins containing an N-terminal arginine or lysine. The chain is Leucyl/phenylalanyl-tRNA--protein transferase from Nitrobacter hamburgensis (strain DSM 10229 / NCIMB 13809 / X14).